The sequence spans 480 residues: uncharacterized protein (480 aa).

One can recognise a PUA domain in the interval Lys131–Lys207.

The protein in the C-terminal section; belongs to the PAPS reductase family.

This is an uncharacterized protein from Methanocaldococcus jannaschii (strain ATCC 43067 / DSM 2661 / JAL-1 / JCM 10045 / NBRC 100440) (Methanococcus jannaschii).